A 188-amino-acid polypeptide reads, in one-letter code: MTIKSDKWIRRMAQEHGMIEPFVERQVRGADDSRVISYGVSSYGYDVRCAAEFKVFTNIHSAVVDPKNFDEKSFVDINSDVCIIPPNSFALARTVEYFRIPRDVLTICLGKSTYARCGIIVNVTPLEPEWEGHVTLEFSNTTNLPAKIYANEGVAQMLFLQSDEACEVSYKDRGGKYQGQRGVTLPKA.

Residues 111-116, 135-137, Gln156, Tyr170, and Gln180 each bind dCTP; these read KSTYAR and TLE. The Proton donor/acceptor role is filled by Glu137.

The protein belongs to the dCTP deaminase family. As to quaternary structure, homotrimer.

The catalysed reaction is dCTP + H2O + H(+) = dUTP + NH4(+). It functions in the pathway pyrimidine metabolism; dUMP biosynthesis; dUMP from dCTP (dUTP route): step 1/2. Functionally, catalyzes the deamination of dCTP to dUTP. The sequence is that of dCTP deaminase from Pseudomonas aeruginosa (strain UCBPP-PA14).